Consider the following 257-residue polypeptide: Zinc import ATP-binding protein ZnuC (257 aa).

In terms of domain architecture, ABC transporter spans Val-5 to Gln-220. Residue Gly-37–Ser-44 participates in ATP binding. The tract at residues His-234–Ala-257 is disordered.

It belongs to the ABC transporter superfamily. Zinc importer (TC 3.A.1.15.5) family. In terms of assembly, the complex is composed of two ATP-binding proteins (ZnuC), two transmembrane proteins (ZnuB) and a solute-binding protein (ZnuA).

The protein localises to the cell inner membrane. The enzyme catalyses Zn(2+)(out) + ATP(in) + H2O(in) = Zn(2+)(in) + ADP(in) + phosphate(in) + H(+)(in). Its function is as follows. Part of the ABC transporter complex ZnuABC involved in zinc import. Responsible for energy coupling to the transport system. The polypeptide is Zinc import ATP-binding protein ZnuC (Photobacterium profundum (strain SS9)).